Reading from the N-terminus, the 549-residue chain is Hydroxylamine reductase (549 aa).

[4Fe-4S] cluster contacts are provided by Cys3, Cys6, Cys15, and Cys21. Positions 248, 272, 316, 403, 431, 456, 490, and 492 each coordinate hybrid [4Fe-2O-2S] cluster. Cys403 carries the cysteine persulfide modification.

It belongs to the HCP family. Requires [4Fe-4S] cluster as cofactor. Hybrid [4Fe-2O-2S] cluster serves as cofactor.

The protein resides in the cytoplasm. The enzyme catalyses A + NH4(+) + H2O = hydroxylamine + AH2 + H(+). In terms of biological role, catalyzes the reduction of hydroxylamine to form NH(3) and H(2)O. This Rhodospirillum rubrum (strain ATCC 11170 / ATH 1.1.1 / DSM 467 / LMG 4362 / NCIMB 8255 / S1) protein is Hydroxylamine reductase.